Consider the following 780-residue polypeptide: Alpha-xylosidase (780 aa).

Residues Asn-48, Asn-84, Asn-247, and Asn-298 are each glycosylated (N-linked (GlcNAc...) asparagine). Catalysis depends on residues Asp-434 and Glu-437. An N-linked (GlcNAc...) asparagine glycan is attached at Asn-443. Asp-501 (proton donor) is an active-site residue. Asn-718 carries N-linked (GlcNAc...) asparagine glycosylation.

The protein belongs to the glycosyl hydrolase 31 family.

The protein localises to the secreted. It catalyses the reaction Hydrolysis of terminal, non-reducing alpha-D-xylose residues with release of alpha-D-xylose.. Its function is as follows. Catalyzes the liberation of alpha-xylose from the non-reducing terminal glucose of xyloglucan oligosaccharides. The chain is Alpha-xylosidase from Emericella nidulans (strain FGSC A4 / ATCC 38163 / CBS 112.46 / NRRL 194 / M139) (Aspergillus nidulans).